The following is a 428-amino-acid chain: Dihydroorotase (428 aa).

The Zn(2+) site is built by His59 and His61. Substrate is bound by residues 61–63 (HLR) and Asn93. 3 residues coordinate Zn(2+): Asp151, His178, and His231. Residue Asn277 coordinates substrate. Asp304 serves as a coordination point for Zn(2+). Asp304 is a catalytic residue. Residues His308 and 322 to 323 (FG) contribute to the substrate site.

It belongs to the metallo-dependent hydrolases superfamily. DHOase family. Class I DHOase subfamily. Zn(2+) serves as cofactor.

The enzyme catalyses (S)-dihydroorotate + H2O = N-carbamoyl-L-aspartate + H(+). Its pathway is pyrimidine metabolism; UMP biosynthesis via de novo pathway; (S)-dihydroorotate from bicarbonate: step 3/3. Its function is as follows. Catalyzes the reversible cyclization of carbamoyl aspartate to dihydroorotate. The sequence is that of Dihydroorotase from Bacillus pumilus (strain SAFR-032).